Here is a 332-residue protein sequence, read N- to C-terminus: Biotin synthase (332 aa).

Positions tryptophan 53–alanine 283 constitute a Radical SAM core domain. [4Fe-4S] cluster-binding residues include cysteine 71, cysteine 75, and cysteine 78. [2Fe-2S] cluster is bound by residues cysteine 150, cysteine 211, and lysine 281.

Belongs to the radical SAM superfamily. Biotin synthase family. Homodimer. It depends on [4Fe-4S] cluster as a cofactor. Requires [2Fe-2S] cluster as cofactor.

It catalyses the reaction (4R,5S)-dethiobiotin + (sulfur carrier)-SH + 2 reduced [2Fe-2S]-[ferredoxin] + 2 S-adenosyl-L-methionine = (sulfur carrier)-H + biotin + 2 5'-deoxyadenosine + 2 L-methionine + 2 oxidized [2Fe-2S]-[ferredoxin]. It participates in cofactor biosynthesis; biotin biosynthesis; biotin from 7,8-diaminononanoate: step 2/2. Its function is as follows. Catalyzes the conversion of dethiobiotin (DTB) to biotin by the insertion of a sulfur atom into dethiobiotin via a radical-based mechanism. The polypeptide is Biotin synthase (Chlorobium luteolum (strain DSM 273 / BCRC 81028 / 2530) (Pelodictyon luteolum)).